The sequence spans 20 residues: Ribosome-inactivating protein (20 aa).

The disordered stretch occupies residues 1–20 (NVRFDLSGATSSSYKTFIKN). Residues 8–20 (GATSSSYKTFIKN) are compositionally biased toward polar residues.

Belongs to the ribosome-inactivating protein family. Type 1 RIP subfamily.

It carries out the reaction Endohydrolysis of the N-glycosidic bond at one specific adenosine on the 28S rRNA.. The chain is Ribosome-inactivating protein from Cucurbita pepo (Vegetable marrow).